The following is a 617-amino-acid chain: E3 ubiquitin-protein ligase ORTHRUS 1 (617 aa).

The PHD-type zinc finger occupies 12 to 62 (DGVCMRCQVNPPSEETLTCGTCVTPWHVPCLLPESLASSTGEWECPDCSGV). The segment at 129-169 (CSICIQLPERPITTPCGHNFCLKCFEKWAVGQGKLTCMICR) adopts an RING-type 1 zinc-finger fold. Positions 258–407 (TRKQGVLVGE…FKVCRYLFVR (150 aa)) constitute a YDG domain. An RING-type 2 zinc finger spans residues 495 to 552 (CQICREVLSLPVTTPCAHNFCKACLEAKFAGITQLRERSNGGRKLRAKKNIMTCPCCT). Residues 563-593 (QVNREMMEIIENFKKSEEEADASISEEEEEE) are a coiled coil. Positions 575–617 (FKKSEEEADASISEEEEEESEPPTKKIKMDNNSVGGSGTSLSA) are disordered. Residues 580–595 (EEADASISEEEEEESE) are compositionally biased toward acidic residues. Residues 604-617 (DNNSVGGSGTSLSA) are compositionally biased toward polar residues.

In terms of tissue distribution, expressed in inflorescences and leaves.

It is found in the nucleus. The catalysed reaction is S-ubiquitinyl-[E2 ubiquitin-conjugating enzyme]-L-cysteine + [acceptor protein]-L-lysine = [E2 ubiquitin-conjugating enzyme]-L-cysteine + N(6)-ubiquitinyl-[acceptor protein]-L-lysine.. It functions in the pathway protein modification; protein ubiquitination. Its function is as follows. E3 ubiquitin-protein ligase. Participates in CpG methylation-dependent transcriptional regulation and epigenetic transcriptional silencing. Mediates ubiquitination with the E2 ubiquitin-conjugating enzymes UBC11, UBC8 and UBC8 homologs (e.g. UBC10, UBC11, UBC28 and UBC29) but not with UBC27, UBC30, UBC32, UBC34 and UBC36. Promotes methylation-mediated gene silencing leading, for example, to early flowering. Can bind to CpG, CpNpG, and CpNpN DNA motifs, with a strong preference for methylated forms, and with highest affinity for CpG substrate. This Arabidopsis thaliana (Mouse-ear cress) protein is E3 ubiquitin-protein ligase ORTHRUS 1 (ORTH1).